The following is a 215-amino-acid chain: MQHHACSPPRLILASSSRYRRELLERLRVPFDVVAPEIDETPLPDETPCATALRLAAAKARAAAERARAPHGALVIGSDQVATFDGLQIGKPGTHARALAQLQAMRGRDVEFHSALCLYDSRSGATQSEDIVTRVRFRTLTDVELDAYLRAETPYDVAGSAKSEGLGIALLDAIDSDDPTALVGLPLIALTRMLRAAGYPLFGAPAPAADGVNGR.

Asp79 functions as the Proton acceptor in the catalytic mechanism.

Belongs to the Maf family. YceF subfamily. Requires a divalent metal cation as cofactor.

The protein localises to the cytoplasm. It carries out the reaction N(7)-methyl-GTP + H2O = N(7)-methyl-GMP + diphosphate + H(+). Nucleoside triphosphate pyrophosphatase that hydrolyzes 7-methyl-GTP (m(7)GTP). May have a dual role in cell division arrest and in preventing the incorporation of modified nucleotides into cellular nucleic acids. The polypeptide is 7-methyl-GTP pyrophosphatase (Burkholderia mallei (strain ATCC 23344)).